We begin with the raw amino-acid sequence, 37 residues long: Large ribosomal subunit protein bL36 (37 aa).

The protein belongs to the bacterial ribosomal protein bL36 family.

This is Large ribosomal subunit protein bL36 from Nitrosococcus oceani (strain ATCC 19707 / BCRC 17464 / JCM 30415 / NCIMB 11848 / C-107).